The sequence spans 289 residues: S-methyl-5'-thioadenosine phosphorylase (289 aa).

Phosphate is bound by residues serine 24, 66–67 (RH), and 99–100 (TA). Residue methionine 202 coordinates substrate. Threonine 203 lines the phosphate pocket. 226–228 (DYD) lines the substrate pocket.

It belongs to the PNP/MTAP phosphorylase family. MTAP subfamily. Homotrimer.

The protein localises to the cytoplasm. The protein resides in the nucleus. It catalyses the reaction S-methyl-5'-thioadenosine + phosphate = 5-(methylsulfanyl)-alpha-D-ribose 1-phosphate + adenine. Its pathway is amino-acid biosynthesis; L-methionine biosynthesis via salvage pathway; S-methyl-5-thio-alpha-D-ribose 1-phosphate from S-methyl-5'-thioadenosine (phosphorylase route): step 1/1. Functionally, catalyzes the reversible phosphorylation of S-methyl-5'-thioadenosine (MTA) to adenine and 5-methylthioribose-1-phosphate. Involved in the breakdown of MTA, a major by-product of polyamine biosynthesis. Responsible for the first step in the methionine salvage pathway after MTA has been generated from S-adenosylmethionine. Has broad substrate specificity with 6-aminopurine nucleosides as preferred substrates. In Drosophila pseudoobscura pseudoobscura (Fruit fly), this protein is S-methyl-5'-thioadenosine phosphorylase.